Here is a 422-residue protein sequence, read N- to C-terminus: MILVKDAIINGKKQNMLVEGNIIKKIGNISNSEVSKDETEIIDGKNCVLIPGLINTHTHVPMSLFRGVADDIPLMDWLSGHIWPMESKLNEKIVYAGTLLGTIEMIKSGTTAFNDMYFFLDSIIKAVDETGIRSTIAYGMIDLFDEEKREKELKTARESLEMIKNLNNSRITGALGPHAPYTCSKEILESTNALAREFNVPIHIHMNETLDEINQVVERTGMRPFEYLNSFGFFEDVTTICAHCVHLSDSEIQIMKEKNMFAAHNPVSNLKLASGVSPVLKLLENNIPVTLGTDGCGSNNNMNLFEEIKAVALIHKGVNLNPVAVTAKEAFEFGTKNGAKALNINSGEIKEGKLADFVLINMKKPYLTPKENIESHLVYSFNGVVDTVVIDGKIVLNAGKMVNIDEEKVYELAEEAYFELAK.

Residues histidine 57 and histidine 59 each contribute to the Zn(2+) site. The substrate site is built by glutamate 86 and histidine 178. Position 205 (histidine 205) interacts with Zn(2+). Residues glutamate 208 and aspartate 294 each contribute to the substrate site. Aspartate 294 serves as a coordination point for Zn(2+).

It belongs to the metallo-dependent hydrolases superfamily. MTA/SAH deaminase family. In terms of assembly, homotetramer. It depends on Zn(2+) as a cofactor.

It catalyses the reaction 5'-deoxyadenosine + H2O + H(+) = 5'-deoxyinosine + NH4(+). The catalysed reaction is S-adenosyl-L-homocysteine + H2O + H(+) = S-inosyl-L-homocysteine + NH4(+). The enzyme catalyses S-methyl-5'-thioadenosine + H2O + H(+) = S-methyl-5'-thioinosine + NH4(+). It carries out the reaction adenosine + H2O + H(+) = inosine + NH4(+). It functions in the pathway amino-acid biosynthesis; S-adenosyl-L-methionine biosynthesis. In terms of biological role, catalyzes the deamination of three SAM-derived enzymatic products, namely 5'-deoxyadenosine, S-adenosyl-L-homocysteine, and 5'-methylthioadenosine, to produce the inosine analogs. Can also deaminate adenosine. The preferred substrate for this enzyme is 5'-deoxyadenosine, but all these substrates are efficiently deaminated. Likely functions in a S-adenosyl-L-methionine (SAM) recycling pathway from S-adenosyl-L-homocysteine (SAH) produced from SAM-dependent methylation reactions. May also be involved in the recycling of 5'-deoxyadenosine, whereupon the 5'-deoxyribose moiety of 5'-deoxyinosine is further metabolized to deoxyhexoses used for the biosynthesis of aromatic amino acids in methanogens. The polypeptide is 5'-deoxyadenosine deaminase (Methanococcus maripaludis (strain C5 / ATCC BAA-1333)).